A 194-amino-acid polypeptide reads, in one-letter code: A-type ATP synthase subunit E (194 aa).

The disordered stretch occupies residues 35–56; that stretch reads DAEADADQIREEREAEVERTIE. Basic and acidic residues predominate over residues 41–56; sequence DQIREEREAEVERTIE.

The protein belongs to the V-ATPase E subunit family. As to quaternary structure, has multiple subunits with at least A(3), B(3), C, D, E, F, H, I and proteolipid K(x).

The protein localises to the cell membrane. In terms of biological role, component of the A-type ATP synthase that produces ATP from ADP in the presence of a proton gradient across the membrane. The chain is A-type ATP synthase subunit E from Haloarcula marismortui (strain ATCC 43049 / DSM 3752 / JCM 8966 / VKM B-1809) (Halobacterium marismortui).